The chain runs to 240 residues: Aspartate/glutamate leucyltransferase (240 aa).

Belongs to the R-transferase family. Bpt subfamily.

It is found in the cytoplasm. The enzyme catalyses N-terminal L-glutamyl-[protein] + L-leucyl-tRNA(Leu) = N-terminal L-leucyl-L-glutamyl-[protein] + tRNA(Leu) + H(+). It catalyses the reaction N-terminal L-aspartyl-[protein] + L-leucyl-tRNA(Leu) = N-terminal L-leucyl-L-aspartyl-[protein] + tRNA(Leu) + H(+). Functions in the N-end rule pathway of protein degradation where it conjugates Leu from its aminoacyl-tRNA to the N-termini of proteins containing an N-terminal aspartate or glutamate. This is Aspartate/glutamate leucyltransferase from Bordetella avium (strain 197N).